The following is a 355-amino-acid chain: UDP-N-acetylglucosamine--N-acetylmuramyl-(pentapeptide) pyrophosphoryl-undecaprenol N-acetylglucosamine transferase (355 aa).

Residues 15 to 17 (TGG), asparagine 127, arginine 163, serine 191, isoleucine 244, 263 to 268 (ALTVSE), and glutamine 288 contribute to the UDP-N-acetyl-alpha-D-glucosamine site.

The protein belongs to the glycosyltransferase 28 family. MurG subfamily.

It localises to the cell inner membrane. It catalyses the reaction di-trans,octa-cis-undecaprenyl diphospho-N-acetyl-alpha-D-muramoyl-L-alanyl-D-glutamyl-meso-2,6-diaminopimeloyl-D-alanyl-D-alanine + UDP-N-acetyl-alpha-D-glucosamine = di-trans,octa-cis-undecaprenyl diphospho-[N-acetyl-alpha-D-glucosaminyl-(1-&gt;4)]-N-acetyl-alpha-D-muramoyl-L-alanyl-D-glutamyl-meso-2,6-diaminopimeloyl-D-alanyl-D-alanine + UDP + H(+). It functions in the pathway cell wall biogenesis; peptidoglycan biosynthesis. In terms of biological role, cell wall formation. Catalyzes the transfer of a GlcNAc subunit on undecaprenyl-pyrophosphoryl-MurNAc-pentapeptide (lipid intermediate I) to form undecaprenyl-pyrophosphoryl-MurNAc-(pentapeptide)GlcNAc (lipid intermediate II). In Salmonella typhi, this protein is UDP-N-acetylglucosamine--N-acetylmuramyl-(pentapeptide) pyrophosphoryl-undecaprenol N-acetylglucosamine transferase.